Consider the following 21-residue polypeptide: Protopolybiakinin-1 (21 aa).

The segment covering 1–11 (DKNKKPIRVGG) has biased composition (basic residues). Positions 1–21 (DKNKKPIRVGGRRPPGFTPFR) are disordered.

This sequence belongs to the bradykinin-related peptide family. As to expression, expressed by the venom gland.

Its subcellular location is the secreted. Causes constriction of the isolated rat ileum muscles (is 13-fold less potent than bradykinin (BK)), as well as degranulation of mast cells (is 7-fold more potent than BK). In vivo, causes algesic effects. Muscle constriction and algesic effects are partially mediated by bradykinin receptors B2 (BDKRB2). This is Protopolybiakinin-1 from Protopolybia exigua (Neotropical social wasp).